Consider the following 210-residue polypeptide: MNIFTKKPNPREVLRESKREMTQATRGIEKEIGSLQSEEKKLVLEIKRTAKSGNEGATKILARQLIRLRQQIANLQGSRAQMRGIATHTQAMHAHTSVAAGMQGATKAMAAMSKNMDPAKQAKVMREFQKQSAQMDMTTEMMSDSIDDALDNDEAEDETEDLTNQVLDEIGIDIASQLSSAPKGKIGGKKAEDVGSSGIDELEKRLAALR.

The segment at 1–23 (MNIFTKKPNPREVLRESKREMTQ) is disordered. Positions 9-23 (NPREVLRESKREMTQ) are enriched in basic and acidic residues. Residues 28–84 (IEKEIGSLQSEEKKLVLEIKRTAKSGNEGATKILARQLIRLRQQIANLQGSRAQMRG) are a coiled coil. Positions 178–200 (LSSAPKGKIGGKKAEDVGSSGID) are disordered.

The protein belongs to the SNF7 family. As to quaternary structure, component of the endosomal sorting required for transport complex III (ESCRT-III), composed at least of VPS2, VPS20, VPS24 and VPS32.

The protein resides in the endosome. Component of the ESCRT-III complex, which is required for multivesicular bodies (MVBs) formation and sorting of endosomal cargo proteins into MVBs. The ESCRT-III complex is probably involved in the concentration of MVB cargo. The chain is Vacuolar protein sorting-associated protein 2 homolog 3 (VPS2.3) from Arabidopsis thaliana (Mouse-ear cress).